The sequence spans 216 residues: Thiamine-phosphate synthase (216 aa).

4-amino-2-methyl-5-(diphosphooxymethyl)pyrimidine-binding positions include 41-45 (QLREK) and Asp-77. Residues Asp-78 and Asp-97 each contribute to the Mg(2+) site. Ser-116 contacts 4-amino-2-methyl-5-(diphosphooxymethyl)pyrimidine. 143 to 145 (TTS) is a binding site for 2-[(2R,5Z)-2-carboxy-4-methylthiazol-5(2H)-ylidene]ethyl phosphate. Residue Lys-146 coordinates 4-amino-2-methyl-5-(diphosphooxymethyl)pyrimidine. Residues Gly-174 and 194–195 (IS) each bind 2-[(2R,5Z)-2-carboxy-4-methylthiazol-5(2H)-ylidene]ethyl phosphate.

Belongs to the thiamine-phosphate synthase family. Requires Mg(2+) as cofactor.

It catalyses the reaction 2-[(2R,5Z)-2-carboxy-4-methylthiazol-5(2H)-ylidene]ethyl phosphate + 4-amino-2-methyl-5-(diphosphooxymethyl)pyrimidine + 2 H(+) = thiamine phosphate + CO2 + diphosphate. The enzyme catalyses 2-(2-carboxy-4-methylthiazol-5-yl)ethyl phosphate + 4-amino-2-methyl-5-(diphosphooxymethyl)pyrimidine + 2 H(+) = thiamine phosphate + CO2 + diphosphate. The catalysed reaction is 4-methyl-5-(2-phosphooxyethyl)-thiazole + 4-amino-2-methyl-5-(diphosphooxymethyl)pyrimidine + H(+) = thiamine phosphate + diphosphate. It participates in cofactor biosynthesis; thiamine diphosphate biosynthesis; thiamine phosphate from 4-amino-2-methyl-5-diphosphomethylpyrimidine and 4-methyl-5-(2-phosphoethyl)-thiazole: step 1/1. Condenses 4-methyl-5-(beta-hydroxyethyl)thiazole monophosphate (THZ-P) and 2-methyl-4-amino-5-hydroxymethyl pyrimidine pyrophosphate (HMP-PP) to form thiamine monophosphate (TMP). The chain is Thiamine-phosphate synthase from Pediococcus pentosaceus (strain ATCC 25745 / CCUG 21536 / LMG 10740 / 183-1w).